The primary structure comprises 308 residues: Tyramine--L-glutamate ligase (308 aa).

Positions 89–291 constitute an ATP-grasp domain; the sequence is KSLLKSENID…LAELLIKNAN (203 aa). 115-192 lines the ATP pocket; sequence TKIIESYPVK…QEFIDGENLS (78 aa). Positions 252, 264, and 266 each coordinate Mg(2+). Mn(2+)-binding residues include D252, E264, and N266.

Mg(2+) serves as cofactor. It depends on Mn(2+) as a cofactor.

The catalysed reaction is tyramine + L-glutamate + ATP = gamma-L-glutamyltyramine + ADP + phosphate + H(+). The protein operates within cofactor biosynthesis; methanofuran biosynthesis. Its function is as follows. Catalyzes the formation of an amide bond between tyramine and the gamma carboxy group of L-glutamate. The enzyme also accepts phenylethylamine in vitro. This is Tyramine--L-glutamate ligase (mfnD) from Methanocaldococcus jannaschii (strain ATCC 43067 / DSM 2661 / JAL-1 / JCM 10045 / NBRC 100440) (Methanococcus jannaschii).